Reading from the N-terminus, the 165-residue chain is Putative protein FAM86C1P (165 aa).

Belongs to the class I-like SAM-binding methyltransferase superfamily. EEF2KMT family. Interacts with EEF2KMT.

In Homo sapiens (Human), this protein is Putative protein FAM86C1P.